A 408-amino-acid polypeptide reads, in one-letter code: 3-phosphoshikimate 1-carboxyvinyltransferase (408 aa).

Positions 20, 21, and 25 each coordinate 3-phosphoshikimate. K20 contributes to the phosphoenolpyruvate binding site. R111 provides a ligand contact to phosphoenolpyruvate. Residues S151, S152, Q153, S178, D293, and K320 each contribute to the 3-phosphoshikimate site. Q153 contributes to the phosphoenolpyruvate binding site. Catalysis depends on D293, which acts as the Proton acceptor. Phosphoenolpyruvate is bound by residues R324, R365, and K389.

It belongs to the EPSP synthase family. Monomer.

The protein localises to the cytoplasm. The catalysed reaction is 3-phosphoshikimate + phosphoenolpyruvate = 5-O-(1-carboxyvinyl)-3-phosphoshikimate + phosphate. Its pathway is metabolic intermediate biosynthesis; chorismate biosynthesis. Catalyzes the transfer of the enolpyruvyl moiety of phosphoenolpyruvate (PEP) to the 5-hydroxyl of shikimate-3-phosphate (S3P) to produce enolpyruvyl shikimate-3-phosphate and inorganic phosphate. This is 3-phosphoshikimate 1-carboxyvinyltransferase from Sulfurisphaera tokodaii (strain DSM 16993 / JCM 10545 / NBRC 100140 / 7) (Sulfolobus tokodaii).